Reading from the N-terminus, the 211-residue chain is Interleukin-6 (211 aa).

Residues methionine 1–alanine 24 form the signal peptide. The cysteines at positions 70 and 76 are disulfide-linked. The residue at position 79 (serine 79) is a Phosphoserine. Cysteine 99 and cysteine 109 are oxidised to a cystine.

This sequence belongs to the IL-6 superfamily. As to quaternary structure, component of a hexamer of two molecules each of IL6, IL6R and IL6ST; first binds to IL6R to associate with the signaling subunit IL6ST. Interacts with IL6R (via the N-terminal ectodomain); this interaction may be affected by IL6R-binding with SORL1, hence decreasing IL6 cis signaling. Interacts with SORL1 (via the N-terminal ectodomain); this interaction leads to IL6 internalization and lysosomal degradation. May form a trimeric complex with the soluble SORL1 ectodomain and soluble IL6R receptor; this interaction might stabilize circulating IL6, hence promoting IL6 trans signaling.

Its subcellular location is the secreted. In terms of biological role, cytokine with a wide variety of biological functions in immunity, tissue regeneration, and metabolism. Binds to IL6R, then the complex associates to the signaling subunit IL6ST/gp130 to trigger the intracellular IL6-signaling pathway. The interaction with the membrane-bound IL6R and IL6ST stimulates 'classic signaling', whereas the binding of IL6 and soluble IL6R to IL6ST stimulates 'trans-signaling'. Alternatively, 'cluster signaling' occurs when membrane-bound IL6:IL6R complexes on transmitter cells activate IL6ST receptors on neighboring receiver cells. Functionally, IL6 is a potent inducer of the acute phase response. Rapid production of IL6 contributes to host defense during infection and tissue injury, but excessive IL6 synthesis is involved in disease pathology. In the innate immune response, is synthesized by myeloid cells, such as macrophages and dendritic cells, upon recognition of pathogens through toll-like receptors (TLRs) at the site of infection or tissue injury. In the adaptive immune response, is required for the differentiation of B-cells into immunoglolin-secreting cells. Plays a major role in the differentiation of CD4(+) T cell subsets. Essential factor for the development of T follicular helper (Tfh) cells that are required for the induction of germinal-center formation. Together with IL21, controls the early generation of Tfh cells and are critical for an effective antibody response to acute viral infection. Required to drive naive CD4(+) T cells to the Th17 lineage, through 'cluster signaling' by dendritic cells. Also required for proliferation of myeloma cells and the survival of plasmablast cells. Acts as an essential factor in bone homeostasis and on vessels directly or indirectly by induction of VEGF, resulting in increased angiogenesis activity and vascular permeability. Induces, through 'trans-signaling' and synergistically with IL1B and TNF, the production of VEGF. Involved in metabolic controls, is discharged into the bloodstream after muscle contraction increasing lipolysis and improving insulin resistance. 'Trans-signaling' in central nervous system regulates energy and glucose homeostasis. Mediates, through GLP-1, crosstalk between insulin-sensitive tissues, intestinal L cells and pancreatic islets to adapt to changes in insulin demand. Also acts as a myokine. Plays a protective role during liver injury, being required for maintenance of tissue regeneration. Also has a pivotal role in iron metabolism by regulating HAMP/hepcidin expression upon inflammation or bacterial infection. Through activation of IL6ST-YAP-NOTCH pathway, induces inflammation-induced epithelial regeneration. The sequence is that of Interleukin-6 from Rattus norvegicus (Rat).